The chain runs to 362 residues: Tyrosine recombinase XerH (362 aa).

In terms of domain architecture, Core-binding (CB) spans 43–140 (ECLNELNQAC…ALLGLFSYID (98 aa)). One can recognise a Tyr recombinase domain in the interval 170–357 (KLPTHLNNEE…DKQRLEEAAS (188 aa)). Residues R213, K239, H309, R312, and H335 contribute to the active site. Y344 acts as the O-(3'-phospho-DNA)-tyrosine intermediate in catalysis.

This sequence belongs to the 'phage' integrase family. XerH subfamily.

The protein localises to the cytoplasm. With respect to regulation, ftsK is required for recombination. Its function is as follows. Site-specific tyrosine recombinase, which acts by catalyzing the cutting and rejoining of the recombining DNA molecules. Involved in chromosome segregation. May contribute to chromosome decatenation. This chain is Tyrosine recombinase XerH, found in Helicobacter pylori (strain ATCC 700392 / 26695) (Campylobacter pylori).